We begin with the raw amino-acid sequence, 241 residues long: Large ribosomal subunit protein uL3 (241 aa).

Disordered stretches follow at residues Ser140–Asp168 and Ala216–Ala241. N5-methylglutamine is present on Gln151.

It belongs to the universal ribosomal protein uL3 family. In terms of assembly, part of the 50S ribosomal subunit. Forms a cluster with proteins L14 and L19. Post-translationally, methylated by PrmB.

Its function is as follows. One of the primary rRNA binding proteins, it binds directly near the 3'-end of the 23S rRNA, where it nucleates assembly of the 50S subunit. The protein is Large ribosomal subunit protein uL3 of Xanthobacter autotrophicus (strain ATCC BAA-1158 / Py2).